Here is a 236-residue protein sequence, read N- to C-terminus: 2,3,4,5-tetrahydropyridine-2,6-dicarboxylate N-acetyltransferase (236 aa).

The protein belongs to the transferase hexapeptide repeat family. DapH subfamily.

The enzyme catalyses (S)-2,3,4,5-tetrahydrodipicolinate + acetyl-CoA + H2O = L-2-acetamido-6-oxoheptanedioate + CoA. It functions in the pathway amino-acid biosynthesis; L-lysine biosynthesis via DAP pathway; LL-2,6-diaminopimelate from (S)-tetrahydrodipicolinate (acetylase route): step 1/3. Catalyzes the transfer of an acetyl group from acetyl-CoA to tetrahydrodipicolinate. In Brevibacillus brevis (strain 47 / JCM 6285 / NBRC 100599), this protein is 2,3,4,5-tetrahydropyridine-2,6-dicarboxylate N-acetyltransferase.